The following is a 152-amino-acid chain: Large ribosomal subunit protein uL22 (152 aa).

A compositionally biased stretch (low complexity) spans 124 to 145; that stretch reads APKKAAAKKAAPAKETTPAATE. Positions 124–152 are disordered; that stretch reads APKKAAAKKAAPAKETTPAATESKTEGAE.

The protein belongs to the universal ribosomal protein uL22 family. In terms of assembly, part of the 50S ribosomal subunit.

Functionally, this protein binds specifically to 23S rRNA; its binding is stimulated by other ribosomal proteins, e.g. L4, L17, and L20. It is important during the early stages of 50S assembly. It makes multiple contacts with different domains of the 23S rRNA in the assembled 50S subunit and ribosome. The globular domain of the protein is located near the polypeptide exit tunnel on the outside of the subunit, while an extended beta-hairpin is found that lines the wall of the exit tunnel in the center of the 70S ribosome. The chain is Large ribosomal subunit protein uL22 from Salinispora tropica (strain ATCC BAA-916 / DSM 44818 / JCM 13857 / NBRC 105044 / CNB-440).